We begin with the raw amino-acid sequence, 396 residues long: Fumarate--(S)-2,3-diaminopropanoate ligase (396 aa).

It catalyses the reaction (S)-2,3-diaminopropanoate + fumarate + ATP = N(3)-fumaroyl-(S)-2,3-diaminopropanoate + AMP + diphosphate. The protein operates within antibiotic biosynthesis. Involved in dapdiamide antibiotics biosynthesis. Ligates fumarate and 2,3-diaminopropionate (DAP) to form N-beta-fumaroyl-DAP. Can also form N-succinoyl-DAP from succinate and DAP, with lower efficiency. The protein is Fumarate--(S)-2,3-diaminopropanoate ligase of Enterobacter agglomerans (Erwinia herbicola).